A 306-amino-acid chain; its full sequence is Diacylglycerol kinase (306 aa).

A DAGKc domain is found at 1–132; the sequence is MRKRARIIYN…VDIGKMNSRY (132 aa). ATP contacts are provided by residues 10–14, Thr-41, 67–73, and Thr-94; these read NPTSG and GDGTLNE. Residues Arg-213, Asp-216, and Tyr-218 each coordinate Mg(2+). The active-site Proton acceptor is the Glu-273.

The protein belongs to the diacylglycerol/lipid kinase family. In terms of assembly, homodimer. Mg(2+) serves as cofactor.

It carries out the reaction a 1,2-diacyl-sn-glycerol + ATP = a 1,2-diacyl-sn-glycero-3-phosphate + ADP + H(+). Catalyzes the phosphorylation of diacylglycerol (DAG) into phosphatidic acid. Is a key enzyme involved in the production of lipoteichoic acid by reintroducing DAG formed from the breakdown of membrane phospholipids into the phosphatidylglycerol biosynthetic pathway. This Staphylococcus carnosus (strain TM300) protein is Diacylglycerol kinase (dagK).